Reading from the N-terminus, the 342-residue chain is Ferredoxin--NADP reductase (342 aa).

FAD-binding residues include Cys-17, Asp-36, Gln-44, Tyr-49, Val-89, Phe-124, Asp-289, and Thr-330.

Belongs to the ferredoxin--NADP reductase type 2 family. As to quaternary structure, homodimer. The cofactor is FAD.

The enzyme catalyses 2 reduced [2Fe-2S]-[ferredoxin] + NADP(+) + H(+) = 2 oxidized [2Fe-2S]-[ferredoxin] + NADPH. The polypeptide is Ferredoxin--NADP reductase (Bradyrhizobium sp. (strain ORS 278)).